We begin with the raw amino-acid sequence, 68 residues long: Beta-toxin Im-2 (68 aa).

Residues 1–67 enclose the LCN-type CS-alpha/beta domain; sequence KDGYPMVRAG…VWTYEKNTCK (67 aa). 4 disulfide bridges follow: Cys-15/Cys-66, Cys-19/Cys-40, Cys-26/Cys-47, and Cys-30/Cys-49.

Belongs to the long (4 C-C) scorpion toxin superfamily. Sodium channel inhibitor family. Beta subfamily. As to expression, expressed by the venom gland.

It is found in the secreted. In terms of biological role, beta toxins bind voltage-independently at site-4 of sodium channels (Nav) and shift the voltage of activation toward more negative potentials thereby affecting sodium channel activation and promoting spontaneous and repetitive firing. Is toxic to both insect and mammals. Induces paralysis in Acheta domestica crickets, but does not induce death, whereas intracerebroventricular injection into mice causes immediate death (at a dose of 0.05 ug/g). The protein is Beta-toxin Im-2 of Isometrus maculatus (Lesser brown scorpion).